The sequence spans 566 residues: Amino acid transporter 6-1 (566 aa).

A run of 11 helical transmembrane segments spans residues 65–85, 137–157, 158–178, 187–207, 216–236, 250–270, 334–354, 367–387, 392–412, 423–443, and 455–475; these read YVLLLLYSIVVFTTGAVFYGW, MTFAVACLMSAGAGTLLDWLG, PLWTELLGQLLNLVGWLFLAF, YPALVFIGLGADASMLPTLCI, GLIITILGSAASASFGIPLVL, VSIGYCFFGPVLGVLVALLFM, FFSIRYFLIVLYFVVVSWATS, DVVSVIEVLLPLSFIPCILLG, VVGIIRVLFVMNTSGLLTYVF, LSACCFMVYMSLLTSQVYVYV, and LIGISNLTGGLLSLVSNPLYE. Asparagine 476 carries an N-linked (GlcNAc...) asparagine glycan. Residues 489–509 traverse the membrane as a helical segment; that stretch reads IQIAMTALLCVQYVWIFILGF.

It belongs to the SLC43A transporter (TC 2.A.1.44) family.

Its subcellular location is the cell membrane. The enzyme catalyses L-lysine(in) = L-lysine(out). The catalysed reaction is L-arginine(in) = L-arginine(out). It carries out the reaction L-methionine(in) = L-methionine(out). It catalyses the reaction L-leucine(in) = L-leucine(out). Functionally, cationic and neutral amino acid transporter. Transports lysine with high affinity. Can transport arginine, methionine and leucine. Does not require inorganic ions, such as sodium, chloride, potassium, calcium or magnesium, for transport activity. In Toxoplasma gondii (strain ATCC 50611 / Me49), this protein is Amino acid transporter 6-1.